The following is a 129-amino-acid chain: Replication initiation control protein YabA (129 aa).

Zn(2+)-binding residues include H103, C105, C119, and C122.

The protein belongs to the YabA family. In terms of assembly, homotetramer. Interacts with both DnaA and DnaN, acting as a bridge between these two proteins. Zn(2+) is required as a cofactor.

The protein localises to the cytoplasm. The protein resides in the nucleoid. Its function is as follows. Involved in control of chromosome replication initiation. Inhibits the cooperative binding of DnaA to the oriC region, thus negatively regulating initiation of chromosome replication. Inhibits the ability of DnaA-ATP to form a helix on DNA; does not disassemble preformed DnaA-DNA helices. Decreases the residence time of DnaA on the chromosome at its binding sites (oriC, replication forks and promoter-binding sites). Tethers DnaA to the replication machinery via the DNA polymerase beta sliding clamp subunit (dnaN). Associates with oriC and other DnaA targets on the chromosome in a DnaA-dependent manner. The sequence is that of Replication initiation control protein YabA from Listeria welshimeri serovar 6b (strain ATCC 35897 / DSM 20650 / CCUG 15529 / CIP 8149 / NCTC 11857 / SLCC 5334 / V8).